We begin with the raw amino-acid sequence, 537 residues long: Tyrosine-protein kinase Fyn (537 aa).

Glycine 2 carries N-myristoyl glycine lipidation. 2 S-palmitoyl cysteine lipidation sites follow: cysteine 3 and cysteine 6. Threonine 12 is subject to Phosphothreonine; by PKC. 2 positions are modified to phosphoserine: serine 21 and serine 26. Residues 82–143 enclose the SH3 domain; that stretch reads TGVTLFVALY…PSNYVAPVDS (62 aa). An SH2 domain is found at 149 to 246; the sequence is WYFGKLGRKD…GLCCRLVVPC (98 aa). Tyrosine 185 is modified (phosphotyrosine). Residues 271–524 form the Protein kinase domain; it reads LQLIKRLGNG…YLQGFLEDYF (254 aa). Residues 277–285 and lysine 299 contribute to the ATP site; that span reads LGNGQFGEV. Catalysis depends on aspartate 390, which acts as the Proton acceptor. Tyrosine 420 carries the post-translational modification Phosphotyrosine; by autocatalysis. Tyrosine 531 carries the phosphotyrosine; by CSK modification.

Belongs to the protein kinase superfamily. Tyr protein kinase family. SRC subfamily. In terms of assembly, interacts (via its SH3 domain) with PIK3R1 and PRMT8. Interacts with FYB1, PAG1, and SH2D1A. Interacts with CD79A (tyrosine-phosphorylated form); the interaction increases FYN activity. Interacts (via SH2 domain) with CSF1R (tyrosine phosphorylated). Interacts with TOM1L1 (phosphorylated form). Interacts with KDR (tyrosine phosphorylated). Interacts (via SH3 domain) with KLHL2 (via N-terminus). Interacts with SH2D1A and SLAMF1. Interacts with ITCH; the interaction phosphorylates ITCH and negatively regulates its activity. Interacts with FASLG. Interacts with RUNX3. Interacts with KIT. Interacts with EPHA8; possible downstream effector of EPHA8 in regulation of cell adhesion. Interacts with PTK2/FAK1; this interaction leads to PTK2/FAK1 phosphorylation and activation. Interacts with CAV1; this interaction couples integrins to the Ras-ERK pathway. Interacts with UNC119. Interacts (via SH2 domain) with PTPRH (phosphorylated form). Interacts with PTPRO (phosphorylated form). Interacts with PTPRB (phosphorylated form). Interacts with FYB2. Interacts with DSCAM. Interacts with SKAP1 and FYB1; this interaction promotes the phosphorylation of CLNK. Interacts with NEDD9; in the presence of PTK2. It depends on Mn(2+) as a cofactor. In terms of processing, autophosphorylated at Tyr-420. Phosphorylation on the C-terminal tail at Tyr-531 by CSK maintains the enzyme in an inactive state. PTPRC/CD45 dephosphorylates Tyr-531 leading to activation. Ultraviolet B (UVB) strongly increase phosphorylation at Thr-12 and kinase activity, and promotes translocation from the cytoplasm to the nucleus. Dephosphorylation at Tyr-420 by PTPN2 negatively regulates T-cell receptor signaling. Phosphorylated at tyrosine residues, which can be enhanced by NTN1. Palmitoylated. Palmitoylation at Cys-3 and Cys-6, probably by ZDHHC21, regulates subcellular location.

Its subcellular location is the cytoplasm. The protein localises to the nucleus. It is found in the cell membrane. The protein resides in the perikaryon. The enzyme catalyses L-tyrosyl-[protein] + ATP = O-phospho-L-tyrosyl-[protein] + ADP + H(+). Its activity is regulated as follows. Inhibited by phosphorylation of Tyr-531 by leukocyte common antigen and activated by dephosphorylation of this site. In terms of biological role, non-receptor tyrosine-protein kinase that plays a role in many biological processes including regulation of cell growth and survival, cell adhesion, integrin-mediated signaling, cytoskeletal remodeling, cell motility, immune response and axon guidance. Inactive FYN is phosphorylated on its C-terminal tail within the catalytic domain. Following activation by PKA, the protein subsequently associates with PTK2/FAK1, allowing PTK2/FAK1 phosphorylation, activation and targeting to focal adhesions. Involved in the regulation of cell adhesion and motility through phosphorylation of CTNNB1 (beta-catenin) and CTNND1 (delta-catenin). Regulates cytoskeletal remodeling by phosphorylating several proteins including the actin regulator WAS and the microtubule-associated proteins MAP2 and MAPT. Promotes cell survival by phosphorylating AGAP2/PIKE-A and preventing its apoptotic cleavage. Participates in signal transduction pathways that regulate the integrity of the glomerular slit diaphragm (an essential part of the glomerular filter of the kidney) by phosphorylating several slit diaphragm components including NPHS1, KIRREL1 and TRPC6. Plays a role in neural processes by phosphorylating DPYSL2, a multifunctional adapter protein within the central nervous system, ARHGAP32, a regulator for Rho family GTPases implicated in various neural functions, and SNCA, a small pre-synaptic protein. Involved in reelin signaling by mediating phosphorylation of DAB1 following reelin (RELN)-binding to its receptor. Participates in the downstream signaling pathways that lead to T-cell differentiation and proliferation following T-cell receptor (TCR) stimulation. Phosphorylates PTK2B/PYK2 in response to T-cell receptor activation. Also participates in negative feedback regulation of TCR signaling through phosphorylation of PAG1, thereby promoting interaction between PAG1 and CSK and recruitment of CSK to lipid rafts. CSK maintains LCK and FYN in an inactive form. Promotes CD28-induced phosphorylation of VAV1. In mast cells, phosphorylates CLNK after activation of immunoglobulin epsilon receptor signaling. Can also promote CD244-mediated NK cell activation. The sequence is that of Tyrosine-protein kinase Fyn from Sus scrofa (Pig).